A 1305-amino-acid chain; its full sequence is Cyclin-G-associated kinase (1305 aa).

Ser-2 carries the N-acetylserine modification. Phosphoserine occurs at positions 2 and 16. One can recognise a Protein kinase domain in the interval 40–317 (LRVRRVLAEG…EVVRQLQEIA (278 aa)). ATP is bound by residues 46–54 (LAEGGFAFV) and Lys-69. Asp-173 serves as the catalytic Proton acceptor. Residues 397 to 564 (SVANYAKGDL…EYVCDMVAEE (168 aa)) form the Phosphatase tensin-type domain. Residue Ser-454 is modified to Phosphoserine. Positions 570–708 (SKPMLVKSVV…FQVNLEVEVE (139 aa)) constitute a C2 tensin-type domain. Disordered regions lie at residues 707-732 (VEPR…NPKI) and 747-854 (FGKP…AAGT). Ser-768 carries the phosphoserine modification. Thr-774 bears the Phosphothreonine mark. Positions 776-789 (SDSPQSSSTDTNHF) are enriched in polar residues. Ser-781 is subject to Phosphoserine. Residue Thr-792 is modified to Phosphothreonine. Residues 805-816 (LDNTSPKESQSV) show a composition bias toward polar residues. 3 positions are modified to phosphoserine: Ser-809, Ser-824, and Ser-827. Acidic residues predominate over residues 822–832 (DGSEVSDEEEA). Over residues 836–848 (SEERKPGAGEDTP) the composition is skewed to basic and acidic residues. Ser-938 carries the phosphoserine modification. Residues 1037 to 1139 (DTWADTATPG…WTPQAKPAPR (103 aa)) are disordered. Over residues 1084–1099 (DLSDLSSSLQGLPAGL) the composition is skewed to low complexity. Over residues 1111-1132 (TQKSNSPWQANRPTAPGTSWTP) the composition is skewed to polar residues. At Arg-1122 the chain carries Omega-N-methylarginine. A Phosphoserine modification is found at Ser-1171. The J domain maps to 1241–1305 (SRWTPVSMAD…FENQGSRPLF (65 aa)).

This sequence belongs to the protein kinase superfamily. Ser/Thr protein kinase family.

The protein localises to the cytoplasm. It localises to the perinuclear region. Its subcellular location is the golgi apparatus. The protein resides in the trans-Golgi network. It is found in the cell junction. The protein localises to the focal adhesion. It localises to the cytoplasmic vesicle. Its subcellular location is the clathrin-coated vesicle. It catalyses the reaction L-seryl-[protein] + ATP = O-phospho-L-seryl-[protein] + ADP + H(+). The enzyme catalyses L-threonyl-[protein] + ATP = O-phospho-L-threonyl-[protein] + ADP + H(+). Functionally, associates with cyclin G and CDK5. Seems to act as an auxilin homolog that is involved in the uncoating of clathrin-coated vesicles by Hsc70 in non-neuronal cells. Expression oscillates slightly during the cell cycle, peaking at G1. May play a role in clathrin-mediated endocytosis and intracellular trafficking, and in the dynamics of clathrin assembly/disassembly. The chain is Cyclin-G-associated kinase from Mus musculus (Mouse).